We begin with the raw amino-acid sequence, 209 residues long: Mitochondrial import inner membrane translocase subunit Tim23 (209 aa).

3 consecutive transmembrane segments (helical) span residues 73-93 (FELA…FGAL), 125-145 (ALWA…GVIV), and 180-200 (GGLA…WEHI).

This sequence belongs to the Tim17/Tim22/Tim23 family. In terms of assembly, component of the TIM23 complex at least composed of timm23, timm17 and timm50. The complex interacts with the timm44 component of the PAM complex.

It is found in the mitochondrion inner membrane. Functionally, essential component of the TIM23 complex, a complex that mediates the translocation of transit peptide-containing proteins across the mitochondrial inner membrane. The protein is Mitochondrial import inner membrane translocase subunit Tim23 (timm23) of Xenopus laevis (African clawed frog).